Here is a 204-residue protein sequence, read N- to C-terminus: Protease (204 aa).

Active-site residues include histidine 53, aspartate 70, and cysteine 121.

Belongs to the peptidase C5 family. Interacts with protease cofactor pVI-C; this interaction is necessary for protease activation.

It is found in the virion. Its subcellular location is the host nucleus. It catalyses the reaction Cleaves proteins of the adenovirus and its host cell at two consensus sites: -Yaa-Xaa-Gly-Gly-|-Xaa- and -Yaa-Xaa-Gly-Xaa-|-Gly- (in which Yaa is Met, Ile or Leu, and Xaa is any amino acid).. With respect to regulation, requires DNA and protease cofactor for maximal activation. Inside nascent virions, becomes partially activated by binding to the viral DNA, allowing it to cleave the cofactor that binds to the protease and fully activates it. Actin, like the viral protease cofactor, seems to act as a cofactor in the cleavage of cytokeratin 18 and of actin itself. Its function is as follows. Cleaves viral precursor proteins (pTP, pIIIa, pVI, pVII, pVIII, and pX) inside newly assembled particles giving rise to mature virions. Protease complexed to its cofactor slides along the viral DNA to specifically locate and cleave the viral precursors. Mature virions have a weakened organization compared to the unmature virions, thereby facilitating subsequent uncoating. Without maturation, the particle lacks infectivity and is unable to uncoat. Late in adenovirus infection, in the cytoplasm, may participate in the cytoskeleton destruction. Cleaves host cell cytoskeletal keratins K7 and K18. This Porcine adenovirus A serotype 3 (PAdV-3) protein is Protease.